The chain runs to 435 residues: uncharacterized protein (435 aa).

Helical transmembrane passes span 40–60, 103–123, 133–153, 195–215, 226–246, 313–333, 358–378, 381–401, and 414–434; these read LVST…EAVF, VLWT…WLIL, IMLA…IYNP, LIHE…IIVL, ICTA…AVVG, VAVV…LFFV, LALP…AVDW, WWVM…IDRP, and VFVC…NNIG.

It is found in the cell membrane. This is an uncharacterized protein from Mycobacterium bovis (strain ATCC BAA-935 / AF2122/97).